The chain runs to 160 residues: Cytochrome c-type biogenesis protein CcmE (160 aa).

Over 1-8 (MNPRRKQR) the chain is Cytoplasmic. The chain crosses the membrane as a helical; Signal-anchor for type II membrane protein span at residues 9–29 (LTWVAILVIGVSVATGLMLYA). Residues 30–160 (LSQSIDLFYT…PNTVEKGEGQ (131 aa)) lie on the Periplasmic side of the membrane. The heme site is built by histidine 130 and tyrosine 134.

Belongs to the CcmE/CycJ family.

It localises to the cell inner membrane. Functionally, heme chaperone required for the biogenesis of c-type cytochromes. Transiently binds heme delivered by CcmC and transfers the heme to apo-cytochromes in a process facilitated by CcmF and CcmH. The protein is Cytochrome c-type biogenesis protein CcmE of Idiomarina loihiensis (strain ATCC BAA-735 / DSM 15497 / L2-TR).